The sequence spans 141 residues: Large ribosomal subunit protein uL16 (141 aa).

It belongs to the universal ribosomal protein uL16 family. In terms of assembly, part of the 50S ribosomal subunit.

Functionally, binds 23S rRNA and is also seen to make contacts with the A and possibly P site tRNAs. The protein is Large ribosomal subunit protein uL16 of Campylobacter lari (strain RM2100 / D67 / ATCC BAA-1060).